Consider the following 166-residue polypeptide: Lipoprotein signal peptidase (166 aa).

The next 4 helical transmembrane spans lie at L11–L31, I42–L62, V69–M89, and F99–A119. Catalysis depends on residues D122 and D140. Residues W133–V153 traverse the membrane as a helical segment.

It belongs to the peptidase A8 family.

It is found in the cell inner membrane. It catalyses the reaction Release of signal peptides from bacterial membrane prolipoproteins. Hydrolyzes -Xaa-Yaa-Zaa-|-(S,diacylglyceryl)Cys-, in which Xaa is hydrophobic (preferably Leu), and Yaa (Ala or Ser) and Zaa (Gly or Ala) have small, neutral side chains.. It participates in protein modification; lipoprotein biosynthesis (signal peptide cleavage). Its function is as follows. This protein specifically catalyzes the removal of signal peptides from prolipoproteins. The chain is Lipoprotein signal peptidase from Pelagibacter ubique (strain HTCC1062).